An 814-amino-acid chain; its full sequence is MEPEINCSELCDSFPGQELDRRPLHDLCKTTITSSHHSSKTISSLSPVLLGIVWTFLSCGLLLILFFLAFTIHCRKNRIVKMSSPNLNIVTLLGSCLTYSSAYLFGIQDVLVGSSMETLIQTRLSMLCIGTSLVFGPILGKSWRLYKVFTQRVPDKRVIIKDLQLLGLVAALLMADVILLMTWVLTDPIQCLQILSVSMTVTGKDVSCTSTSTHFCASRYSDVWIALIWGCKGLLLLYGAYLAGLTGHVSSPPVNQSLTIMVGVNLLVLAAGLLFVVTRYLHSWPNLVFGLTSGGIFVCTTTINCFIFIPQLKQWKAFEEENQTIRRMAKYFSTPNKSFHTQYGEEENCHPRGEKSSMERLLTEKNAVIESLQEQVNNAKEKIVRLMSAECTYDLPEGAAPPASSPNKDVQAVASVHTLAAAQGPSGHLSDFQNDPGMAARDSQCTSGPSSYAQSLEGPGKDSSFSPGKEEKISDSKDFSDHLDSGCSQKPWTEQSLGPERGDQVPMNPSQSLLPERGGSDPQRQRHLENSEEPPERRSRVSSVIREKLQEVLQDLGLGPEASLSTAPSCHQQTWKNSAAFSPQKMPLSKELGFSPYMVRRRRAAQRARSHFPGSAPSSVGHRANRTVPGAHSRLHVQNGDSPSLAPQTTDSRVRRPSSRKPSLPSDPQDRPGTLEGSKQSQTEPEGARGSKAAFLRQPSGSGRAPSPAAPCLSKASPDLPEQWQLWPPVPSGCASLSSQHSYFDTESSSSDEFFCRCHRPYCEICFQSSSDSSDSGTSDTDPEPTGGLASWEKLWARSKPIVNFKDDLKPTLV.

Residues 1 to 47 (MEPEINCSELCDSFPGQELDRRPLHDLCKTTITSSHHSSKTISSLSP) are Extracellular-facing. Residue Asn-6 is glycosylated (N-linked (GlcNAc...) asparagine). The chain crosses the membrane as a helical span at residues 48-68 (VLLGIVWTFLSCGLLLILFFL). At 69-86 (AFTIHCRKNRIVKMSSPN) the chain is on the cytoplasmic side. The helical transmembrane segment at 87–107 (LNIVTLLGSCLTYSSAYLFGI) threads the bilayer. Residues 108–118 (QDVLVGSSMET) lie on the Extracellular side of the membrane. A helical membrane pass occupies residues 119-139 (LIQTRLSMLCIGTSLVFGPIL). The Cytoplasmic segment spans residues 140–164 (GKSWRLYKVFTQRVPDKRVIIKDLQ). A helical transmembrane segment spans residues 165–185 (LLGLVAALLMADVILLMTWVL). Residues 186 to 222 (TDPIQCLQILSVSMTVTGKDVSCTSTSTHFCASRYSD) lie on the Extracellular side of the membrane. The helical transmembrane segment at 223–243 (VWIALIWGCKGLLLLYGAYLA) threads the bilayer. Residues 244 to 257 (GLTGHVSSPPVNQS) lie on the Cytoplasmic side of the membrane. Residues 258 to 278 (LTIMVGVNLLVLAAGLLFVVT) traverse the membrane as a helical segment. Topologically, residues 279–288 (RYLHSWPNLV) are extracellular. Residues 289–309 (FGLTSGGIFVCTTTINCFIFI) form a helical membrane-spanning segment. The Cytoplasmic segment spans residues 310–814 (PQLKQWKAFE…FKDDLKPTLV (505 aa)). Positions 354 to 390 (EKSSMERLLTEKNAVIESLQEQVNNAKEKIVRLMSAE) form a coiled coil. 3 disordered regions span residues 422 to 545 (AQGP…SSVI), 557 to 724 (GLGP…PEQW), and 769 to 792 (SSSD…LASW). The span at 443-454 (SQCTSGPSSYAQ) shows a compositional bias: polar residues. Residues 468–484 (GKEEKISDSKDFSDHLD) show a composition bias toward basic and acidic residues. A compositionally biased stretch (polar residues) spans 486–496 (GCSQKPWTEQS). The span at 523–545 (QRQRHLENSEEPPERRSRVSSVI) shows a compositional bias: basic and acidic residues. Over residues 563-581 (SLSTAPSCHQQTWKNSAAF) the composition is skewed to polar residues. The span at 599-610 (VRRRRAAQRARS) shows a compositional bias: basic residues. Residues 639–651 (NGDSPSLAPQTTD) are compositionally biased toward polar residues. Positions 769 to 780 (SSSDSSDSGTSD) are enriched in low complexity.

This sequence belongs to the G-protein coupled receptor 3 family. GABA-B receptor subfamily. Ubiquitous expression both in the CNS and in peripheral tissues. Very high expression in fetal brain and testis relative to expression in other tissues.

The protein localises to the cell membrane. Functionally, orphan G-protein coupled receptor involved in the regulation of hair cell orientation in mechanosensory organs of the inner ear. It is required to trigger a 180 degree reversal in hair cell orientation, creating a virtual line of polarity reversal (LPR) across which stereociliary bundles are arranged in opposite orientations. The polypeptide is Probable G-protein coupled receptor 156 (GPR156) (Homo sapiens (Human)).